The following is a 301-amino-acid chain: Protoheme IX farnesyltransferase (301 aa).

Helical transmembrane passes span 20–42, 55–75, 105–125, 126–146, 150–172, 176–198, 227–247, 249–269, and 280–300; these read FTELVKIGIVNSNTITAFTGMWL, VDVIFFTIVGSALIVAASGAF, ALMVALVLGVVGTIMLFMTTW, QAGVLGVIGVFLYVVVYSLYA, LVSNTVIGSFSGAVPPLIGWFAV, FSIVPIMLFLVMFCWQPPHFYAI, MFFWVILLTILPFFMFDLGIV, VILATLLNIGWLALSIYGFKM, and FVYSLNYMTILFVAMVVISIF.

The protein belongs to the UbiA prenyltransferase family. Protoheme IX farnesyltransferase subfamily. In terms of assembly, interacts with CtaA.

The protein localises to the cell membrane. It catalyses the reaction heme b + (2E,6E)-farnesyl diphosphate + H2O = Fe(II)-heme o + diphosphate. Its pathway is porphyrin-containing compound metabolism; heme O biosynthesis; heme O from protoheme: step 1/1. In terms of biological role, converts heme B (protoheme IX) to heme O by substitution of the vinyl group on carbon 2 of heme B porphyrin ring with a hydroxyethyl farnesyl side group. This Listeria monocytogenes serovar 1/2a (strain ATCC BAA-679 / EGD-e) protein is Protoheme IX farnesyltransferase.